The following is a 30-amino-acid chain: Cyclotide hyen-F (30 aa).

The segment at residues 1–30 is a cross-link (cyclopeptide (Gly-Asn)); the sequence is GLPCGESCVYIPCISTVLGCSCSNKVCYRN. Disulfide bonds link C4-C20, C8-C22, and C13-C27.

This is a cyclic peptide. In terms of tissue distribution, detected in seeds (at protein level).

Functionally, probably participates in a plant defense mechanism. This chain is Cyclotide hyen-F, found in Pigea enneasperma (Spade flower).